The primary structure comprises 205 residues: N-(5'-phosphoribosyl)anthranilate isomerase (205 aa).

The protein belongs to the TrpF family.

The enzyme catalyses N-(5-phospho-beta-D-ribosyl)anthranilate = 1-(2-carboxyphenylamino)-1-deoxy-D-ribulose 5-phosphate. Its pathway is amino-acid biosynthesis; L-tryptophan biosynthesis; L-tryptophan from chorismate: step 3/5. The chain is N-(5'-phosphoribosyl)anthranilate isomerase (TRP1) from Zygosaccharomyces bailii.